The chain runs to 320 residues: Malate dehydrogenase (320 aa).

NAD(+) is bound by residues 10–15 and D34; that span reads GAGQIG. Substrate contacts are provided by R83 and R89. Residues N96 and 119 to 121 each bind NAD(+); that span reads ITN. The substrate site is built by N121 and R152. H176 serves as the catalytic Proton acceptor.

It belongs to the LDH/MDH superfamily. MDH type 3 family.

The enzyme catalyses (S)-malate + NAD(+) = oxaloacetate + NADH + H(+). Catalyzes the reversible oxidation of malate to oxaloacetate. This chain is Malate dehydrogenase, found in Roseobacter denitrificans (strain ATCC 33942 / OCh 114) (Erythrobacter sp. (strain OCh 114)).